Reading from the N-terminus, the 70-residue chain is Beta-defensin 43 (70 aa).

The signal sequence occupies residues 1–22 (MRLLLSILGVLTLLSILPLARS). Intrachain disulfides connect Cys29–Cys57 and Cys36–Cys50.

It belongs to the beta-defensin family.

The protein localises to the secreted. Has bactericidal activity. In Rattus norvegicus (Rat), this protein is Beta-defensin 43 (Defb43).